The following is a 599-amino-acid chain: MENIIEINYNQTGKSKKTNEYGMREMQARAFEKRNSQYLLVKAPPASGKSRALMFIGLDKLINQGLRKVIVAVPERSIGSSFKNTDLKSYGFFENWKVDPRNNLTVGGDNSKVKSFVRFMESDDQVLICTHSTLRFAFEKIDDKAFDNCLLAIDEFHHVSADVNSRLGELLRSIIHNSSAHIVAMTGSYFRGDSVPILLPEDEELFDKVTYSYYEQLDGYEYLKGFGIGYHFYQGQYTSAINEVLDTNKKTIVHIPNVNSGESTKDKYDEVGKILDMIGEVEYQDDDTGIIYVKRHSDGKTLKIADLVDDQVGRENVVAYLRNIEALDDLDIIIALGMAKEGFDWPFCEHTLTVGYRGSLTEIVQIIGRCTRDSYNKTYAQFTNLIAMPDAKDEVVTYTVNTMLKAISASLLMEQVLTPDFKFKRRRNESEKSSTTGELFVKGLKEPSTENVKKIIENDINDLKAKIMQDSQVQKTFSGEVDPKVLNKVLIPKVIQKVYPNLSDEEIEEVRQHVVLDTVMKGAKSEVVGSKEFIRMADKFINIEDLDINLIDSINPFQKAFEVLSKELNSPVLKLIQETIDAKRINFDEDELVFIWPKV.

Residues alanine 30–aspartate 207 form the Helicase ATP-binding domain. Position 43–50 (alanine 43–serine 50) interacts with ATP. The DEAH box motif lies at aspartate 154 to histidine 157. Residues glutamine 236 to serine 408 form the Helicase C-terminal domain.

The protein belongs to the helicase family.

The chain is Putative ATP-dependent helicase YeeB (yeeB) from Bacillus subtilis (strain 168).